The chain runs to 129 residues: Fluoride-specific ion channel FluC 2 (129 aa).

Helical transmembrane passes span 9 to 29 (LGTLISVFFFGMIGGTLRYLL), 37 to 57 (GTILVNLIGSFCLAFLTYYVI), 74 to 94 (MVGAFTTFSTFTVDILGLSTF), and 100 to 120 (YLLISVVGGFLLAYTGMILGI). The Na(+) site is built by Gly-76 and Thr-79.

This sequence belongs to the fluoride channel Fluc/FEX (TC 1.A.43) family.

The protein localises to the cell membrane. The enzyme catalyses fluoride(in) = fluoride(out). With respect to regulation, na(+) is not transported, but it plays an essential structural role and its presence is essential for fluoride channel function. Its function is as follows. Fluoride-specific ion channel. Important for reducing fluoride concentration in the cell, thus reducing its toxicity. The sequence is that of Fluoride-specific ion channel FluC 2 from Ligilactobacillus salivarius (strain UCC118) (Lactobacillus salivarius).